A 495-amino-acid polypeptide reads, in one-letter code: uncharacterized protein (495 aa).

The segment at 389-457 (PLPNNGACEH…KDATCPHCGN (69 aa)) adopts a CHY-type zinc-finger fold. 12 residues coordinate Zn(2+): Cys-396, His-398, Cys-410, Cys-411, Cys-417, Cys-420, His-421, His-427, Cys-437, Cys-440, Cys-452, and Cys-455. Over residues 473 to 483 (GMRDRVRMSRK) the composition is skewed to basic and acidic residues. Residues 473 to 495 (GMRDRVRMSRKDPRKYKRKHHGN) are disordered. Positions 484–495 (DPRKYKRKHHGN) are enriched in basic residues.

The protein localises to the cytoplasm. This is an uncharacterized protein from Schizosaccharomyces pombe (strain 972 / ATCC 24843) (Fission yeast).